The following is a 65-amino-acid chain: Ferredoxin-like protein in vnf region (65 aa).

4Fe-4S ferredoxin-type domains follow at residues 2–30 (AMAI…FRDD) and 32–65 (YAIE…PLDD). 8 residues coordinate [4Fe-4S] cluster: Cys-10, Cys-13, Cys-16, Cys-20, Cys-39, Cys-42, Cys-50, and Cys-54.

The cofactor is [4Fe-4S] cluster.

In Azotobacter vinelandii, this protein is Ferredoxin-like protein in vnf region.